A 178-amino-acid polypeptide reads, in one-letter code: Large ribosomal subunit protein bL25 (178 aa).

It belongs to the bacterial ribosomal protein bL25 family. CTC subfamily. In terms of assembly, part of the 50S ribosomal subunit; part of the 5S rRNA/L5/L18/L25 subcomplex. Contacts the 5S rRNA. Binds to the 5S rRNA independently of L5 and L18.

Functionally, this is one of the proteins that binds to the 5S RNA in the ribosome where it forms part of the central protuberance. In Campylobacter lari (strain RM2100 / D67 / ATCC BAA-1060), this protein is Large ribosomal subunit protein bL25.